A 1637-amino-acid chain; its full sequence is Probable serine/threonine-protein kinase gdt2 (1637 aa).

The signal sequence occupies residues 1–19; it reads MNYILYILLILIIFSINNT. Over 20–896 the chain is Extracellular; it reads FSIGSFVYTP…IPVEKINLLP (877 aa). The chain crosses the membrane as a helical span at residues 897-917; sequence IIVPICVTVLVLLSILIVFFG. The Cytoplasmic segment spans residues 918–1637; that stretch reads ARYYKHKKRR…NNNNNNNNNN (720 aa). Positions 977–990 are enriched in polar residues; it reads SDIQTQSENNNLEP. Residues 977-1000 form a disordered region; that stretch reads SDIQTQSENNNLEPTTVETTTTTT. The span at 991-1000 shows a compositional bias: low complexity; that stretch reads TTVETTTTTT. One can recognise a Protein kinase domain in the interval 1290 to 1547; sequence IIIKNYISEG…LSKYLKHLLK (258 aa). ATP contacts are provided by residues 1296 to 1304 and K1317; that span reads ISEGTFGIV. D1408 acts as the Proton acceptor in catalysis. The disordered stretch occupies residues 1557–1637; sequence DKDKKNKKKN…NNNNNNNNNN (81 aa). Composition is skewed to low complexity over residues 1568–1589 and 1597–1637; these read NNNNNNNNNNNNNNNNNNNNNN and NNNI…NNNN.

This sequence in the N-terminal section; belongs to the GDT family. The protein in the C-terminal section; belongs to the protein kinase superfamily. TKL Ser/Thr protein kinase family.

The protein localises to the membrane. It carries out the reaction L-seryl-[protein] + ATP = O-phospho-L-seryl-[protein] + ADP + H(+). The catalysed reaction is L-threonyl-[protein] + ATP = O-phospho-L-threonyl-[protein] + ADP + H(+). Regulates the transition between growth and differentiation. This chain is Probable serine/threonine-protein kinase gdt2 (gdt2), found in Dictyostelium discoideum (Social amoeba).